The following is a 150-amino-acid chain: Large ribosomal subunit protein uL15 (150 aa).

Positions 1-57 (MSLTLQSLKPQKGARRRKMRKGRGIAAGQGASCGFGMRGQKSRSGRPTRPGFEGGQM) are disordered. Basic residues predominate over residues 12–23 (KGARRRKMRKGR). Gly residues predominate over residues 25-37 (IAAGQGASCGFGM).

This sequence belongs to the universal ribosomal protein uL15 family. As to quaternary structure, part of the 50S ribosomal subunit.

Its function is as follows. Binds to the 23S rRNA. The chain is Large ribosomal subunit protein uL15 from Synechococcus sp. (strain RCC307).